Here is a 243-residue protein sequence, read N- to C-terminus: Linker for activation of T-cells family member 2 (243 aa).

At 1–5 (MSSGT) the chain is on the extracellular side. Residues 6–26 (ELLWPGAALLVLLGVAASLCV) traverse the membrane as a helical; Signal-anchor for type III membrane protein segment. Residues Cys-25 and Cys-28 are each lipidated (S-palmitoyl cysteine). The Cytoplasmic portion of the chain corresponds to 27–243 (RCSRPGAKRS…VNGEVAATEA (217 aa)). Ser-44 carries the post-translational modification Phosphoserine. A Phosphotyrosine modification is found at Tyr-58. Residues Ser-59 and Ser-92 each carry the phosphoserine modification. 3 positions are modified to phosphotyrosine: Tyr-136, Tyr-193, and Tyr-233. Residues 174–243 (PTSGLCPSAS…VNGEVAATEA (70 aa)) are disordered.

When phosphorylated, interacts with GRB2. May also interact with SOS1, GAB1 and CBL. Post-translationally, phosphorylated on tyrosines following cross-linking of BCR in B-cells, FCGR1 in myeloid cells, or FCER1 in mast cells; which induces the recruitment of GRB2. May be polyubiquitinated. In terms of tissue distribution, highly expressed in spleen, peripheral blood lymphocytes, and germinal centers of lymph nodes. Also expressed in placenta, lung, pancreas and small intestine. Present in B-cells, NK cells and monocytes. Absent from T-cells (at protein level).

The protein localises to the cell membrane. Its function is as follows. Involved in FCER1 (high affinity immunoglobulin epsilon receptor)-mediated signaling in mast cells. May also be involved in BCR (B-cell antigen receptor)-mediated signaling in B-cells and FCGR1 (high affinity immunoglobulin gamma Fc receptor I)-mediated signaling in myeloid cells. Couples activation of these receptors and their associated kinases with distal intracellular events through the recruitment of GRB2. The chain is Linker for activation of T-cells family member 2 (LAT2) from Homo sapiens (Human).